A 391-amino-acid chain; its full sequence is NAD(P)H-quinone oxidoreductase subunit H, chloroplastic (391 aa).

Belongs to the complex I 49 kDa subunit family. As to quaternary structure, NDH is composed of at least 16 different subunits, 5 of which are encoded in the nucleus.

The protein localises to the plastid. Its subcellular location is the chloroplast thylakoid membrane. It catalyses the reaction a plastoquinone + NADH + (n+1) H(+)(in) = a plastoquinol + NAD(+) + n H(+)(out). The enzyme catalyses a plastoquinone + NADPH + (n+1) H(+)(in) = a plastoquinol + NADP(+) + n H(+)(out). In terms of biological role, NDH shuttles electrons from NAD(P)H:plastoquinone, via FMN and iron-sulfur (Fe-S) centers, to quinones in the photosynthetic chain and possibly in a chloroplast respiratory chain. The immediate electron acceptor for the enzyme in this species is believed to be plastoquinone. Couples the redox reaction to proton translocation, and thus conserves the redox energy in a proton gradient. The protein is NAD(P)H-quinone oxidoreductase subunit H, chloroplastic of Nephroselmis olivacea (Green alga).